The primary structure comprises 482 residues: AYADDLILFANDHRAANRLLKVATEFFRERGLALNATKSAALSVGVVPGKKQLYTHTKNLFYVGGKAIPQLTPDDYFKYLGSRYNFSGQVRPSVELLKTQLARVQSAPLKPAQKLTMIRDHVVARFLSCLQSVRVTLKALKDADRLVRLSVRKVLHLNKSSPDAYIHAPIREGGLGIISLRAHIPAIMRSRLFKIATTADPLTATVLQIPAVEKFYQTLLRWTEGNGGSTTNIRKEWGRKLQESYSGNGLRQGNTSGVSGDWLRNPPNFWSGADYIDAVRLRGNLLPTRGIPSNPPHERKCRAGCNKTESLSHVLQGCPLTHWHPIRRHDRVAGRLRQIAEKKGWMVEEEMRLRLADGSLRKPDLVMAQGDTIVVCDVTIVWEGPNPLTMAYHQKVAYYSQQPVLDAIHDRFPGRSVVVLALVLGARGTWCDQNNAITDTLSLSRAQNSLINNCINGSIIVHREFMRTSFTRATGGRGRGDI.

The region spanning 1-84 is the Reverse transcriptase domain; the sequence is AYADDLILFA…DYFKYLGSRY (84 aa). Residues 208–482 form a nucleic acid-binding endonuclease region; the sequence is QIPAVEKFYQ…ATGGRGRGDI (275 aa).

It catalyses the reaction DNA(n) + a 2'-deoxyribonucleoside 5'-triphosphate = DNA(n+1) + diphosphate. This is Retrovirus-related Pol polyprotein from type-1 retrotransposable element R2 from Popillia japonica (Japanese beetle).